The primary structure comprises 295 residues: Ribosomal RNA small subunit methyltransferase A (295 aa).

S-adenosyl-L-methionine is bound by residues asparagine 28, leucine 30, glycine 55, glutamate 76, aspartate 101, and asparagine 131.

This sequence belongs to the class I-like SAM-binding methyltransferase superfamily. rRNA adenine N(6)-methyltransferase family. RsmA subfamily.

It localises to the cytoplasm. It carries out the reaction adenosine(1518)/adenosine(1519) in 16S rRNA + 4 S-adenosyl-L-methionine = N(6)-dimethyladenosine(1518)/N(6)-dimethyladenosine(1519) in 16S rRNA + 4 S-adenosyl-L-homocysteine + 4 H(+). Functionally, specifically dimethylates two adjacent adenosines (A1518 and A1519) in the loop of a conserved hairpin near the 3'-end of 16S rRNA in the 30S particle. May play a critical role in biogenesis of 30S subunits. The polypeptide is Ribosomal RNA small subunit methyltransferase A (Pelotomaculum thermopropionicum (strain DSM 13744 / JCM 10971 / SI)).